The primary structure comprises 556 residues: Formate--tetrahydrofolate ligase (556 aa).

65 to 72 (TPAGEGKS) is an ATP binding site.

Belongs to the formate--tetrahydrofolate ligase family.

It catalyses the reaction (6S)-5,6,7,8-tetrahydrofolate + formate + ATP = (6R)-10-formyltetrahydrofolate + ADP + phosphate. Its pathway is one-carbon metabolism; tetrahydrofolate interconversion. The sequence is that of Formate--tetrahydrofolate ligase from Streptococcus equi subsp. zooepidemicus (strain MGCS10565).